The chain runs to 716 residues: Putative proline--tRNA ligase C19C7.06 (716 aa).

Positions 655–675 are disordered; the sequence is KNSARQVNGDEPEDEKAPSMG.

It belongs to the class-II aminoacyl-tRNA synthetase family.

The protein localises to the cytoplasm. It carries out the reaction tRNA(Pro) + L-proline + ATP = L-prolyl-tRNA(Pro) + AMP + diphosphate. This Schizosaccharomyces pombe (strain 972 / ATCC 24843) (Fission yeast) protein is Putative proline--tRNA ligase C19C7.06 (prs1).